Consider the following 189-residue polypeptide: Peptidyl-tRNA hydrolase (189 aa).

A tRNA-binding site is contributed by His15. His20 acts as the Proton acceptor in catalysis. Residues Phe66, Asn68, and Asn114 each contribute to the tRNA site.

This sequence belongs to the PTH family. As to quaternary structure, monomer.

The protein localises to the cytoplasm. It catalyses the reaction an N-acyl-L-alpha-aminoacyl-tRNA + H2O = an N-acyl-L-amino acid + a tRNA + H(+). Functionally, hydrolyzes ribosome-free peptidyl-tRNAs (with 1 or more amino acids incorporated), which drop off the ribosome during protein synthesis, or as a result of ribosome stalling. In terms of biological role, catalyzes the release of premature peptidyl moieties from peptidyl-tRNA molecules trapped in stalled 50S ribosomal subunits, and thus maintains levels of free tRNAs and 50S ribosomes. The sequence is that of Peptidyl-tRNA hydrolase from Streptococcus equi subsp. equi (strain 4047).